A 348-amino-acid polypeptide reads, in one-letter code: ELAV-like protein 3 (348 aa).

RRM domains are found at residues 34–112 (TNLI…YARP), 120–200 (ANLY…FANN), and 265–343 (WCIF…FKTS).

Belongs to the RRM elav family. Expression is neural-specific in both embryos and adults. Expressed from neurula stage onwards in primary motor-, inter- and sensory-neurons. Expressed in the closing neural tube and motor neurons of stage 18 embryos, and primarily in the ventricular zone and dorsal region of the tailbud and adult brain. Expressed from stage 26 onwards in the differentiating ganglion cell layer of the retina, extending to the inner nuclear layer at later stages.

Functionally, RNA-binding protein that binds to AU-rich element (ARE) sequences of target mRNAs. May also bind poly-A tracts via RRM 3. May be involved in neuronal differentiation and maintenance. The chain is ELAV-like protein 3 (elavl3) from Xenopus laevis (African clawed frog).